A 138-amino-acid chain; its full sequence is Large ribosomal subunit protein bL12c (138 aa).

This sequence belongs to the bacterial ribosomal protein bL12 family. Homodimer. Part of the ribosomal stalk of the 50S ribosomal subunit. Forms a multimeric L10(L12)X complex, where L10 forms an elongated spine to which 2 to 4 L12 dimers bind in a sequential fashion. Binds GTP-bound translation factors.

The protein localises to the plastid. In terms of biological role, forms part of the ribosomal stalk which helps the ribosome interact with GTP-bound translation factors. Is thus essential for accurate translation. In Euglena longa (Euglenophycean alga), this protein is Large ribosomal subunit protein bL12c.